A 490-amino-acid polypeptide reads, in one-letter code: 2-succinylbenzoate--CoA ligase (490 aa).

It belongs to the ATP-dependent AMP-binding enzyme family. MenE subfamily.

It carries out the reaction 2-succinylbenzoate + ATP + CoA = 2-succinylbenzoyl-CoA + AMP + diphosphate. Its pathway is quinol/quinone metabolism; 1,4-dihydroxy-2-naphthoate biosynthesis; 1,4-dihydroxy-2-naphthoate from chorismate: step 5/7. It participates in quinol/quinone metabolism; menaquinone biosynthesis. Converts 2-succinylbenzoate (OSB) to 2-succinylbenzoyl-CoA (OSB-CoA). In Geobacillus kaustophilus (strain HTA426), this protein is 2-succinylbenzoate--CoA ligase.